Here is a 427-residue protein sequence, read N- to C-terminus: Enolase (427 aa).

Gln-163 serves as a coordination point for (2R)-2-phosphoglycerate. The active-site Proton donor is the Glu-205. Mg(2+)-binding residues include Asp-242, Glu-285, and Asp-312. Positions 337, 366, 367, and 388 each coordinate (2R)-2-phosphoglycerate. Residue Lys-337 is the Proton acceptor of the active site.

The protein belongs to the enolase family. Requires Mg(2+) as cofactor.

It localises to the cytoplasm. Its subcellular location is the secreted. The protein localises to the cell surface. The enzyme catalyses (2R)-2-phosphoglycerate = phosphoenolpyruvate + H2O. Its pathway is carbohydrate degradation; glycolysis; pyruvate from D-glyceraldehyde 3-phosphate: step 4/5. Functionally, catalyzes the reversible conversion of 2-phosphoglycerate (2-PG) into phosphoenolpyruvate (PEP). It is essential for the degradation of carbohydrates via glycolysis. The protein is Enolase of Burkholderia ambifaria (strain MC40-6).